We begin with the raw amino-acid sequence, 49 residues long: MRVKITLACTECKQRNYNTTKNKKNNPDRMEMQKHCKFCKSHTLHKETK.

This sequence belongs to the bacterial ribosomal protein bL33 family.

The sequence is that of Large ribosomal subunit protein bL33 from Alkaliphilus metalliredigens (strain QYMF).